The sequence spans 253 residues: Probable transcriptional regulatory protein Tpet_0454 (253 aa).

It belongs to the TACO1 family.

The protein resides in the cytoplasm. This is Probable transcriptional regulatory protein Tpet_0454 from Thermotoga petrophila (strain ATCC BAA-488 / DSM 13995 / JCM 10881 / RKU-1).